The sequence spans 534 residues: Cysteine/serine-rich nuclear protein 2 (534 aa).

Residue M1 is modified to N-acetylmethionine. Disordered regions lie at residues 1–52 (MDAF…FTPT) and 480–534 (DCGL…PLAV). A compositionally biased stretch (low complexity) spans 31 to 40 (SSDSADSCDS). Positions 42–52 (NPPTTASFTPT) are enriched in polar residues. The segment covering 480-492 (DCGLKEPESEDLH) has biased composition (basic and acidic residues).

This sequence belongs to the AXUD1 family. As to expression, highest expression detected in thymus, brain and ovary. Low levels detected in naive T-cells.

It localises to the nucleus. In terms of biological role, binds to the consensus sequence 5'-AGAGTG-3' and has transcriptional activator activity. May play a role in apoptosis. The polypeptide is Cysteine/serine-rich nuclear protein 2 (Csrnp2) (Mus musculus (Mouse)).